Reading from the N-terminus, the 608-residue chain is Nuclear protein localization protein 4 homolog (608 aa).

Position 2 is an N-acetylalanine (Ala-2). Position 179 is an N6-acetyllysine (Lys-179). The MPN domain occupies Ile-226–Phe-363. Residues Thr-580–Thr-608 form a RanBP2-type zinc finger.

It belongs to the NPL4 family. As to quaternary structure, heterodimer with UFD1. The heterodimer binds ubiquitinated proteins. The heterodimer binds to VCP and inhibits Golgi membrane fusion. Interacts with ZFAND2B; probably through VCP.

It localises to the cytoplasm. Its subcellular location is the cytosol. The protein localises to the endoplasmic reticulum. It is found in the nucleus. It participates in protein degradation; proteasomal ubiquitin-dependent pathway. In terms of biological role, the ternary complex containing UFD1, VCP and NPLOC4 binds ubiquitinated proteins and is necessary for the export of misfolded proteins from the ER to the cytoplasm, where they are degraded by the proteasome. The NPLOC4-UFD1-VCP complex regulates spindle disassembly at the end of mitosis and is necessary for the formation of a closed nuclear envelope. Acts as a negative regulator of type I interferon production via the complex formed with VCP and UFD1, which binds to RIGI and recruits RNF125 to promote ubiquitination and degradation of RIGI. The polypeptide is Nuclear protein localization protein 4 homolog (Nploc4) (Mus musculus (Mouse)).